The sequence spans 327 residues: Beta-ketoacyl-[acyl-carrier-protein] synthase III (327 aa).

Catalysis depends on residues C114 and H254. The interval 255-259 (QANQR) is ACP-binding. The active site involves N284.

The protein belongs to the thiolase-like superfamily. FabH family. In terms of assembly, homodimer.

It localises to the cytoplasm. The enzyme catalyses malonyl-[ACP] + acetyl-CoA + H(+) = 3-oxobutanoyl-[ACP] + CO2 + CoA. It participates in lipid metabolism; fatty acid biosynthesis. Functionally, catalyzes the condensation reaction of fatty acid synthesis by the addition to an acyl acceptor of two carbons from malonyl-ACP. Catalyzes the first condensation reaction which initiates fatty acid synthesis and may therefore play a role in governing the total rate of fatty acid production. Possesses both acetoacetyl-ACP synthase and acetyl transacylase activities. Its substrate specificity determines the biosynthesis of branched-chain and/or straight-chain of fatty acids. The chain is Beta-ketoacyl-[acyl-carrier-protein] synthase III from Levilactobacillus brevis (strain ATCC 367 / BCRC 12310 / CIP 105137 / JCM 1170 / LMG 11437 / NCIMB 947 / NCTC 947) (Lactobacillus brevis).